The sequence spans 570 residues: High-affinity hexose transporter HXT7 (570 aa).

The Cytoplasmic segment spans residues 1–60 (MSQDAAIAEQTPVEHLSAVDSASHSVLSTPSNKAERDEIKAYGEGEEHEPVVEIPKRPAS). Residues 61–81 (AYVTVSIMCIMIAFGGFVFGW) form a helical membrane-spanning segment. At 82–116 (DTGTISGFINQTDFIRRFGMKHKDGTNYLSKVRTG) the chain is on the extracellular side. An N-linked (GlcNAc...) asparagine glycan is attached at asparagine 91. A helical membrane pass occupies residues 117 to 137 (LIVSIFNIGCAIGGIILSKLG). Residues 138–143 (DMYGRK) are Cytoplasmic-facing. The helical transmembrane segment at 144–164 (VGLIVVVVIYIIGIIIQIASI) threads the bilayer. The Extracellular portion of the chain corresponds to 165–174 (NKWYQYFIGR). A helical transmembrane segment spans residues 175–195 (IISGLGVGGIAVLSPMLISEV). At 196–201 (SPKHLR) the chain is on the cytoplasmic side. A helical transmembrane segment spans residues 202–222 (GTLVSCYQLMITAGIFLGYCT). Residues 223-236 (NFGTKNYSNSVQWR) are Extracellular-facing. Asparagine 228 is a glycosylation site (N-linked (GlcNAc...) asparagine). The chain crosses the membrane as a helical span at residues 237–257 (VPLGLCFAWALFMIGGMTFVP). Residues 258–340 (ESPRYLAEVG…IQSLQQLTGD (83 aa)) are Cytoplasmic-facing. A helical transmembrane segment spans residues 341-357 (NYFFYYGTTIFKAVGLS). At 358–363 (DSFETS) the chain is on the extracellular side. The chain crosses the membrane as a helical span at residues 364–381 (IVLGIVNFASTFVGIYVV). The Cytoplasmic segment spans residues 382–388 (ERYGRRT). Residues 389–409 (CLLWGAASMTACMVVYASVGV) form a helical membrane-spanning segment. The Extracellular segment spans residues 410 to 431 (TRLWPNGQDQPSSKGAGNCMIV). A helical membrane pass occupies residues 432-452 (FACFYIFCFATTWAPIPYVVV). Residues 453–469 (SETFPLRVKSKAMSIAT) lie on the Cytoplasmic side of the membrane. A helical transmembrane segment spans residues 470–490 (AANWLWGFLIGFFTPFITGAI). Asparagine 491 is a topological domain (extracellular). The helical transmembrane segment at 492–512 (FYYGYVFMGCLVFMFFYVLLV) threads the bilayer. The Cytoplasmic portion of the chain corresponds to 513-570 (VPETKGLTLEEVNTMWEEGVLPWKSASWVPPSRRGANYDAEEMTHDDKPLYKRMFSTK). Threonine 556 carries the post-translational modification Phosphothreonine. Lysine 560 participates in a covalent cross-link: Glycyl lysine isopeptide (Lys-Gly) (interchain with G-Cter in ubiquitin).

Belongs to the major facilitator superfamily. Sugar transporter (TC 2.A.1.1) family.

The protein localises to the membrane. Its function is as follows. High-affinity glucose transporter. The chain is High-affinity hexose transporter HXT7 (HXT7) from Saccharomyces cerevisiae (strain ATCC 204508 / S288c) (Baker's yeast).